Reading from the N-terminus, the 49-residue chain is uncharacterized protein (49 aa).

The chain crosses the membrane as a helical span at residues 31-48; that stretch reads PDLYTIIVSYFSIFSLFF.

The protein localises to the membrane. This is an uncharacterized protein from Saccharomyces cerevisiae (strain ATCC 204508 / S288c) (Baker's yeast).